The chain runs to 197 residues: uncharacterized protein (197 aa).

The PfpI endopeptidase domain maps to 29–166 (DWSVHTVSLD…FTNLILEMID (138 aa)). C98 functions as the Nucleophile in the catalytic mechanism.

It belongs to the peptidase C56 family.

This is an uncharacterized protein from Bacillus subtilis (strain 168).